A 204-amino-acid polypeptide reads, in one-letter code: Large ribosomal subunit protein bL25 (204 aa).

S123 bears the Phosphoserine mark.

The protein belongs to the bacterial ribosomal protein bL25 family. CTC subfamily. As to quaternary structure, part of the 50S ribosomal subunit; part of the 5S rRNA/L5/L18/L25 subcomplex. Contacts the 5S rRNA. Binds to the 5S rRNA independently of L5 and L18.

This is one of the proteins that binds to the 5S RNA in the ribosome where it forms part of the central protuberance. In Pseudomonas aeruginosa (strain UCBPP-PA14), this protein is Large ribosomal subunit protein bL25.